The sequence spans 89 residues: Small ribosomal subunit protein uS15 (89 aa).

This sequence belongs to the universal ribosomal protein uS15 family. Part of the 30S ribosomal subunit. Forms a bridge to the 50S subunit in the 70S ribosome, contacting the 23S rRNA.

In terms of biological role, one of the primary rRNA binding proteins, it binds directly to 16S rRNA where it helps nucleate assembly of the platform of the 30S subunit by binding and bridging several RNA helices of the 16S rRNA. Its function is as follows. Forms an intersubunit bridge (bridge B4) with the 23S rRNA of the 50S subunit in the ribosome. The polypeptide is Small ribosomal subunit protein uS15 (Rhizobium johnstonii (strain DSM 114642 / LMG 32736 / 3841) (Rhizobium leguminosarum bv. viciae)).